We begin with the raw amino-acid sequence, 298 residues long: Protease HtpX (298 aa).

A run of 2 helical transmembrane segments spans residues 4–24 (IGLFLLTNIAVLAVAMITMNL) and 38–58 (LGNLFAFAAIIGFAGSFVSLA). Histidine 145 contributes to the Zn(2+) binding site. Glutamate 146 is an active-site residue. Residue histidine 149 coordinates Zn(2+). 2 helical membrane passes run 160–180 (LLQGVVNTFVIFFAKIVAYVV) and 194–214 (ITFIVVDIVAQILFGILASMI). Position 223 (glutamate 223) interacts with Zn(2+).

Belongs to the peptidase M48B family. Zn(2+) is required as a cofactor.

Its subcellular location is the cell inner membrane. This is Protease HtpX from Hydrogenovibrio crunogenus (strain DSM 25203 / XCL-2) (Thiomicrospira crunogena).